Reading from the N-terminus, the 227-residue chain is MICOS complex subunit MIC19 (227 aa).

The N-myristoyl glycine moiety is linked to residue Gly2. Ser29 bears the Phosphoserine mark. The tract at residues 34-60 (DRMKETSPSGPKSQRYSGTYGASVSDE) is disordered. Residues 39–55 (TSPSGPKSQRYSGTYGA) show a composition bias toward polar residues. Tyr49 carries the post-translational modification Phosphotyrosine. Residues Ser50, Ser56, and Ser58 each carry the phosphoserine modification. Position 142 is an N6-acetyllysine (Lys142). Positions 180–222 (HPVCADLQAQILQCYRQNTQQTLSCSALASQYMRCVNQAKQST) constitute a CHCH domain. 2 consecutive short sequence motifs (cx9C motif) follow at residues 183–193 (CADLQAQILQC) and 204–214 (CSALASQYMRC). Disulfide bonds link Cys183–Cys214 and Cys193–Cys204.

This sequence belongs to the MICOS complex subunit Mic19 family. Metazoan Mic19 subfamily. Component of the mitochondrial contact site and cristae organizing system (MICOS) complex, composed of at least MICOS10/MIC10, CHCHD3/MIC19, CHCHD6/MIC25, APOOL/MIC27, IMMT/MIC60, APOO/MIC23/MIC26 and MICOS13/MIC13. This complex was also known under the names MINOS or MitOS complex. The MICOS complex associates with mitochondrial outer membrane proteins SAMM50, MTX1 and MTX2 (together described as components of the mitochondrial outer membrane sorting assembly machinery (SAM) complex) and DNAJC11, mitochondrial inner membrane protein TMEM11 and with HSPA9. The MICOS and SAM complexes together with DNAJC11 are part of a large protein complex spanning both membranes termed the mitochondrial intermembrane space bridging (MIB) complex. Interacts with HSPA1A/HSPA1B and OPA1, preferentially with the soluble OPA1 form. Interacts with IMMT/MIC60.

The protein resides in the mitochondrion inner membrane. Its subcellular location is the cytoplasm. The protein localises to the nucleus. It localises to the mitochondrion. Component of the MICOS complex, a large protein complex of the mitochondrial inner membrane that plays crucial roles in the maintenance of crista junctions, inner membrane architecture, and formation of contact sites to the outer membrane. Has also been shown to function as a transcription factor which binds to the BAG1 promoter and represses BAG1 transcription. Plays an important role in the maintenance of the MICOS complex stability and the mitochondrial cristae morphology. In Bos taurus (Bovine), this protein is MICOS complex subunit MIC19 (CHCHD3).